Reading from the N-terminus, the 304-residue chain is UTP--glucose-1-phosphate uridylyltransferase 1 (304 aa).

This sequence belongs to the UDPGP type 2 family.

It carries out the reaction alpha-D-glucose 1-phosphate + UTP + H(+) = UDP-alpha-D-glucose + diphosphate. The protein operates within carbohydrate metabolism; nucleotide-sugar metabolism. The sequence is that of UTP--glucose-1-phosphate uridylyltransferase 1 (hasC1) from Streptococcus pyogenes serotype M3 (strain ATCC BAA-595 / MGAS315).